The primary structure comprises 341 residues: Malate dehydrogenase, mitochondrial (341 aa).

NAD(+) is bound by residues 35–41 (GAAGGIG) and D61. Residues R108 and R114 each coordinate substrate. Residues N121 and 144–146 (ITN) contribute to the NAD(+) site. Substrate contacts are provided by N146 and R180. H204 acts as the Proton acceptor in catalysis. M255 lines the NAD(+) pocket.

The protein belongs to the LDH/MDH superfamily. MDH type 1 family. As to quaternary structure, homodimer.

Its subcellular location is the mitochondrion matrix. It catalyses the reaction (S)-malate + NAD(+) = oxaloacetate + NADH + H(+). Catalyzes the reversible conversion of (S)-malate to oxaloacetate in the citric acid cycle. This Caenorhabditis elegans protein is Malate dehydrogenase, mitochondrial.